The primary structure comprises 214 residues: MATARKPRGGAGGAAQPALDFDAPGEIVCGVDEAGRGPLAGPVVAAAVVLDPARPIVGLDDSKALSAKKRERLFDEIVAHALAYCVASASVEEIDTLNILHATMLAMKRAVEGLAVRPTLAKIDGNRCPMLAIRSEAIVGGDALVPSISAASILAKVTRDRMLVELHQQFPMYGFDAHAGYGTPQHLAALREHGPCEHHRRSFAPVREAFDLIR.

Positions Glu-26–Arg-214 constitute an RNase H type-2 domain. Residues Asp-32, Glu-33, and Asp-124 each coordinate a divalent metal cation.

Belongs to the RNase HII family. It depends on Mn(2+) as a cofactor. Mg(2+) is required as a cofactor.

Its subcellular location is the cytoplasm. The catalysed reaction is Endonucleolytic cleavage to 5'-phosphomonoester.. Its function is as follows. Endonuclease that specifically degrades the RNA of RNA-DNA hybrids. The protein is Ribonuclease HII of Burkholderia thailandensis (strain ATCC 700388 / DSM 13276 / CCUG 48851 / CIP 106301 / E264).